The primary structure comprises 270 residues: Orotidine 5'-phosphate decarboxylase (270 aa).

Residues Asp43, 65 to 67 (KTH), 96 to 105 (DRKFGDIGST), Tyr217, and Arg236 contribute to the substrate site. Lys98 serves as the catalytic Proton donor.

It belongs to the OMP decarboxylase family.

The enzyme catalyses orotidine 5'-phosphate + H(+) = UMP + CO2. It functions in the pathway pyrimidine metabolism; UMP biosynthesis via de novo pathway; UMP from orotate: step 2/2. In Aureobasidium pullulans (Black yeast), this protein is Orotidine 5'-phosphate decarboxylase (URA3).